The following is an 856-amino-acid chain: Protein phosphatase 2C 32 (856 aa).

Serine 152, serine 189, and serine 201 each carry phosphoserine. One can recognise a PPM-type phosphatase domain in the interval 269–835; that stretch reads ESCLESNRNL…DDVSVMVVSL (567 aa). Positions 307 and 308 each coordinate Mn(2+). 3 disordered regions span residues 340 to 373, 388 to 407, and 446 to 485; these read PSED…KSVV, GNTD…GPGK, and NPST…QISS. Residues 395–407 show a composition bias toward low complexity; it reads ADGPPGDSAGPGK. Residues 471 to 485 are compositionally biased toward polar residues; sequence NSGQRHGTKKSQISS. Positions 763 and 826 each coordinate Mn(2+).

Belongs to the PP2C family. It depends on Mg(2+) as a cofactor. Mn(2+) is required as a cofactor. As to expression, expressed in roots, leaves, stems, inflorescences, flowers and throughout the shoot meristem.

Its subcellular location is the nucleus. It carries out the reaction O-phospho-L-seryl-[protein] + H2O = L-seryl-[protein] + phosphate. The enzyme catalyses O-phospho-L-threonyl-[protein] + H2O = L-threonyl-[protein] + phosphate. With respect to regulation, insensitive to okadaic acid. In terms of biological role, involved in the regulation of pedicel length and of CLAVATA pathways controlling stem cell identity at shoot and flower meristems. The sequence is that of Protein phosphatase 2C 32 (POL) from Arabidopsis thaliana (Mouse-ear cress).